The primary structure comprises 124 residues: Heat-labile enterotoxin B chain (124 aa).

The signal sequence occupies residues 1–21 (MNKVKCYVLFTALLSSLYAHG). A disulfide bond links Cys-30 and Cys-107.

As to quaternary structure, heterohexamer of one A chain and of five B chains.

The biological activity of the toxin is produced by the A chain, which activates intracellular adenyl cyclase. This chain is Heat-labile enterotoxin B chain (eltB), found in Escherichia coli.